The chain runs to 313 residues: Nodulation protein D 3 (313 aa).

In terms of domain architecture, HTH lysR-type spans 6 to 63 (LDLNLLVALDALMTKRSVTAAARSINLSQPAMSSAIARLRSYFQDELFRMQGRELITT). The H-T-H motif DNA-binding region spans 23–42 (VTAAARSINLSQPAMSSAIA).

Belongs to the LysR transcriptional regulatory family.

In terms of biological role, nodD regulates the expression of the nodABCFE genes which encode other nodulation proteins. NodD is also a negative regulator of its own expression. Binds flavonoids as inducers. This chain is Nodulation protein D 3 (nodD3), found in Rhizobium meliloti (strain 1021) (Ensifer meliloti).